The primary structure comprises 364 residues: Fructose-bisphosphate aldolase C (364 aa).

At tyrosine 5 the chain carries Phosphotyrosine. Phosphoserine is present on residues serine 36, serine 39, and serine 45. Arginine 56 serves as a coordination point for substrate. Lysine 111 bears the N6-acetyllysine mark. Serine 132 carries the phosphoserine modification. Lysine 147 is a binding site for substrate. The Proton acceptor role is filled by glutamate 188. Lysine 230 acts as the Schiff-base intermediate with dihydroxyacetone-P in catalysis.

This sequence belongs to the class I fructose-bisphosphate aldolase family. In terms of assembly, homotetramer. Interacts with ATP6V1E1.

The enzyme catalyses beta-D-fructose 1,6-bisphosphate = D-glyceraldehyde 3-phosphate + dihydroxyacetone phosphate. It functions in the pathway carbohydrate degradation; glycolysis; D-glyceraldehyde 3-phosphate and glycerone phosphate from D-glucose: step 4/4. This Pan troglodytes (Chimpanzee) protein is Fructose-bisphosphate aldolase C (ALDOC).